We begin with the raw amino-acid sequence, 567 residues long: Geranylgeranyl transferase type-2 subunit alpha (567 aa).

6 PFTA repeats span residues 44–78, 88–122, 124–158, 159–193, 207–241, and 363–397; these read LDES…QLET, LVKA…RLPE, NWTR…QAAV, PPAE…QLHP, VLLK…RADP, and VLQS…ALDP. Ser98 carries the phosphoserine modification. LRR repeat units lie at residues 442–463, 464–486, 487–508, 509–530, and 534–555; these read EVRV…EQLL, LVTH…AALR, CLEV…TNLP, RLQE…QPLA, and RLVL…LEQL.

It belongs to the protein prenyltransferase subunit alpha family. As to quaternary structure, heterotrimer composed of RABGGTA, RABGGTB and CHM; within this trimer, RABGGTA and RABGGTB form the catalytic component B, while CHM (component A) mediates peptide substrate binding. The Rab GGTase dimer (RGGT) interacts with CHM (component A) prior to Rab protein binding; the association is stabilized by geranylgeranyl pyrophosphate (GGpp). The CHM:RGGT:Rab complex is destabilized by GGpp. Interacts with non-phosphorylated form of RAB8A; phosphorylation of RAB8A at 'Thr-72' disrupts this interaction.

It carries out the reaction geranylgeranyl diphosphate + L-cysteinyl-[protein] = S-geranylgeranyl-L-cysteinyl-[protein] + diphosphate. Its activity is regulated as follows. The enzymatic reaction requires the aid of a Rab escort protein (also called component A), such as CHM. Catalyzes the transfer of a geranylgeranyl moiety from geranylgeranyl diphosphate to both cysteines of Rab proteins with the C-terminal sequence -XXCC, -XCXC and -CCXX, such as RAB1A, RAB3A, RAB5A and RAB7A. The chain is Geranylgeranyl transferase type-2 subunit alpha (RABGGTA) from Pongo abelii (Sumatran orangutan).